Reading from the N-terminus, the 153-residue chain is Large ribosomal subunit protein uL15 (153 aa).

A compositionally biased stretch (basic residues) spans 1–40 (MTDKKRRQRGSRTHGGGTHKNRRGAGNRGGRGRAGRKKHE). Residues 1–60 (MTDKKRRQRGSRTHGGGTHKNRRGAGNRGGRGRAGRKKHEQHNYEDVGKSGFKRPEKTDR) form a disordered region. Residues 41–60 (QHNYEDVGKSGFKRPEKTDR) are compositionally biased toward basic and acidic residues.

Belongs to the universal ribosomal protein uL15 family. In terms of assembly, part of the 50S ribosomal subunit.

Its function is as follows. Binds to the 23S rRNA. The chain is Large ribosomal subunit protein uL15 from Halobacterium salinarum (strain ATCC 29341 / DSM 671 / R1).